The chain runs to 311 residues: Nuclear hormone receptor family member nhr-111 (311 aa).

A DNA-binding region (nuclear receptor) is located at residues 39–115; sequence ITLCAVCGDT…KGMNKNAVQP (77 aa). 2 consecutive NR C4-type zinc fingers follow at residues 42 to 62 and 78 to 98; these read CAVC…CFGC and CWNG…CKSC. One can recognise an NR LBD domain in the interval 116 to 311; that stretch reads ERTSHSYTVE…KACEIVISFL (196 aa).

The protein belongs to the nuclear hormone receptor family.

The protein localises to the nucleus. In terms of biological role, orphan nuclear receptor. The chain is Nuclear hormone receptor family member nhr-111 (nhr-111) from Caenorhabditis elegans.